The chain runs to 149 residues: Calmodulin-1 (149 aa).

Ala2 bears the N-acetylalanine mark. EF-hand domains are found at residues 8–43, 44–79, 81–116, and 117–149; these read DQIAEFKEAFSLFDKDGDGCITTKELGTVMRSLGQN, PTEAELQDMINEVDADGNGTIDFPEFLNLMARKMKD, DSEEELKEAFRVFDKDQNGFISAAELRHVMTNLGEK, and LTDEEVDEMIREADVDGDGQINYEEFVKVMMAK. 14 residues coordinate Ca(2+): Asp21, Asp23, Asp25, Cys27, Glu32, Asp57, Asp59, Asn61, Thr63, Glu68, Asp94, Asp96, Asn98, and Glu105. Lys116 is subject to N6,N6,N6-trimethyllysine. Residues Asp130, Asp132, Asp134, Gln136, and Glu141 each coordinate Ca(2+).

The protein belongs to the calmodulin family.

Its function is as follows. Calmodulin mediates the control of a large number of enzymes, ion channels and other proteins by Ca(2+). Among the enzymes to be stimulated by the calmodulin-Ca(2+) complex are a number of protein kinases and phosphatases. The protein is Calmodulin-1 (CAM1-1) of Oryza sativa subsp. indica (Rice).